Reading from the N-terminus, the 755-residue chain is Polyribonucleotide nucleotidyltransferase (755 aa).

Residues aspartate 493 and aspartate 499 each coordinate Mg(2+). The region spanning 560–619 (PRIMTIQIPVDKIGALIGPGGKTIRNICDTTGAQIDIEDDGRVFITAPDGEAAKKAISMI) is the KH domain. The 70-residue stretch at 629–698 (GDIFLGKVVS…NTGKISLSRR (70 aa)) folds into the S1 motif domain. The segment at 704 to 755 (ETPEARKAAGAAPRPRPREEQRGGREEPRSLREELRGPRRDGERPRPRRRDD) is disordered. The segment covering 719–755 (RPREEQRGGREEPRSLREELRGPRRDGERPRPRRRDD) has biased composition (basic and acidic residues).

Belongs to the polyribonucleotide nucleotidyltransferase family. Mg(2+) serves as cofactor.

Its subcellular location is the cytoplasm. The enzyme catalyses RNA(n+1) + phosphate = RNA(n) + a ribonucleoside 5'-diphosphate. Functionally, involved in mRNA degradation. Catalyzes the phosphorolysis of single-stranded polyribonucleotides processively in the 3'- to 5'-direction. The chain is Polyribonucleotide nucleotidyltransferase from Chloroflexus aggregans (strain MD-66 / DSM 9485).